We begin with the raw amino-acid sequence, 500 residues long: NAD(P)H-quinone oxidoreductase chain 4, chloroplastic (500 aa).

14 helical membrane passes run 4–24 (FPWL…IFFL), 37–57 (IGIC…FFQL), 87–107 (IGPI…AWPV), 113–130 (LFHF…GLFS), 134–154 (LLLF…LLSM), 167–187 (FILY…GMGL), 208–228 (ALEI…LPII), 242–262 (HYST…YGLI), 272–292 (AHSI…IYAA), 305–325 (IAYS…SITD), 330–350 (GAVL…FLAG), 386–406 (LALP…GIIT), 416–436 (VLIT…SLSM), and 462–482 (LFIS…PDFV).

Belongs to the complex I subunit 4 family.

It is found in the plastid. The protein resides in the chloroplast thylakoid membrane. It carries out the reaction a plastoquinone + NADH + (n+1) H(+)(in) = a plastoquinol + NAD(+) + n H(+)(out). It catalyses the reaction a plastoquinone + NADPH + (n+1) H(+)(in) = a plastoquinol + NADP(+) + n H(+)(out). The chain is NAD(P)H-quinone oxidoreductase chain 4, chloroplastic from Ceratophyllum demersum (Rigid hornwort).